Consider the following 110-residue polypeptide: MVNWAAVVDDFYQELFKAHPEYQNKFGFKGVALGSLKGNAAYKTQAGKTVDYINAAIGGSADAAGLASRHKGRNVGSAEFHNAKACLAKACSAHGAPDLGHAIDDILSHL.

The 109-residue stretch at 2 to 110 folds into the Globin domain; sequence VNWAAVVDDF…HAIDDILSHL (109 aa). A heme-binding site is contributed by His-70.

The protein belongs to the globin family. In terms of assembly, homotetramer. Self-associates in the deoxy state. Seems to dissociate upon oxygenation.

In terms of biological role, acts as an oxygen store capable of sustaining neuronal activity in an anoxic environment for 5 to 30 minutes. The chain is Neural hemoglobin from Cerebratulus lacteus (Milky ribbon worm).